Reading from the N-terminus, the 24-residue chain is Brevinin-1SPa (24 aa).

A disulfide bridge connects residues cysteine 18 and cysteine 24.

In terms of tissue distribution, expressed by the skin glands.

It localises to the secreted. Functionally, antimicrobial peptide with activity against Gram-negative and Gram-positive bacteria (MIC=13 uM against E.coli, MIC=3 uM against S.aureus) and fungi (MIC=6 uM against C.albicans). Shows hemolytic activity on human erythrocytes (HC(50)=7 uM). The chain is Brevinin-1SPa from Lithobates septentrionalis (Mink frog).